Here is a 27-residue protein sequence, read N- to C-terminus: Caerulein precursor fragment R5 (27 aa).

Expressed by the skin glands.

The protein resides in the secreted. In terms of biological role, antimicrobial peptide. This chain is Caerulein precursor fragment R5, found in Xenopus ruwenzoriensis (Uganda clawed frog).